We begin with the raw amino-acid sequence, 489 residues long: DBIRD complex subunit ZNF326 (489 aa).

Disordered stretches follow at residues 1 to 28 (MDRE…EMGD), 62 to 100 (EQGH…PSFT), 133 to 181 (VGSR…RPGL), and 205 to 263 (PPFK…KNSE). Over residues 7 to 22 (SYNQRSMDSYGNQSYS) the composition is skewed to polar residues. The segment covering 62-76 (EQGHFGDSYDGRYEN) has biased composition (basic and acidic residues). Residues 91-100 (GGSSWDPSFT) are compositionally biased toward polar residues. A Bipartite nuclear localization signal motif is present at residues 200-221 (KRKMAPPFKPVGVFGKKQKLSK). 2 consecutive C2H2 AKAP95-type zinc fingers follow at residues 273–295 (CSFC…STTH) and 365–388 (CSAC…SADH). The tract at residues 431–489 (ETQPEEQQQEQEEEEEEEEQQEQAAVPEQDLSEEQPAAIAAEPEGEDFTCDPLTTTDEV) is disordered. Over residues 433 to 451 (QPEEQQQEQEEEEEEEEQQ) the composition is skewed to acidic residues.

This sequence belongs to the AKAP95 family. Component of the DBIRD complex.

The protein localises to the nucleus. Functionally, core component of the DBIRD complex, a multiprotein complex that acts at the interface between core mRNP particles and RNA polymerase II (RNAPII) and integrates transcript elongation with the regulation of alternative splicing. The polypeptide is DBIRD complex subunit ZNF326 (znf326) (Xenopus tropicalis (Western clawed frog)).